The primary structure comprises 169 residues: MAALLLRHVGRHCLRAHFSPQLCIRNAVPLGTTAKEEMERFWNKNIGSNRPLSPHITIYSWSLPMAMSICHRGTGIALSAGVSLFGMSALLLPGNFESYLELVKSLCLGPALIHTAKFALVFPLMYHTWNGIRHLMWDLGKGLKIPQLYQSGVVVLVLTVLSSMGLAAM.

A mitochondrion-targeting transit peptide spans 1 to 29 (MAALLLRHVGRHCLRAHFSPQLCIRNAVP). The Mitochondrial matrix segment spans residues 30–65 (LGTTAKEEMERFWNKNIGSNRPLSPHITIYSWSLPM). The helical transmembrane segment at 66–90 (AMSICHRGTGIALSAGVSLFGMSAL) threads the bilayer. The Mitochondrial intermembrane segment spans residues 91-110 (LLPGNFESYLELVKSLCLGP). Residues 111-139 (ALIHTAKFALVFPLMYHTWNGIRHLMWDL) form a helical membrane-spanning segment. His-127 serves as a coordination point for heme b. The Mitochondrial matrix segment spans residues 140 to 146 (GKGLKIP). The chain crosses the membrane as a helical span at residues 147 to 167 (QLYQSGVVVLVLTVLSSMGLA). The Mitochondrial intermembrane portion of the chain corresponds to 168–169 (AM).

Belongs to the cytochrome b560 family. Component of complex II composed of four subunits: the flavoprotein (FP) SDHA, iron-sulfur protein (IP) SDHB, and a cytochrome b560 composed of SDHC and SDHD. It depends on heme b as a cofactor.

The protein localises to the mitochondrion inner membrane. Its pathway is carbohydrate metabolism; tricarboxylic acid cycle. Its function is as follows. Membrane-anchoring subunit of succinate dehydrogenase (SDH) that is involved in complex II of the mitochondrial electron transport chain and is responsible for transferring electrons from succinate to ubiquinone (coenzyme Q). SDH also oxidizes malate to the non-canonical enol form of oxaloacetate, enol-oxaloacetate. Enol-oxaloacetate, which is a potent inhibitor of the succinate dehydrogenase activity, is further isomerized into keto-oxaloacetate. This chain is Succinate dehydrogenase cytochrome b560 subunit, mitochondrial (SDHC), found in Homo sapiens (Human).